We begin with the raw amino-acid sequence, 367 residues long: Molybdopterin synthase catalytic subunit (367 aa).

Substrate-binding positions include 101–102 (HR), Lys-117, and 124–126 (KKE). Residues 325-350 (RHFTKREPSSMEAAPPKKSRKKSYSA) are disordered.

The protein belongs to the MoaE family. MOCS2B subfamily. Heterotetramer; composed of 2 small (Mocs2A) and 2 large (Mocs2B) subunits. Component of the Ada2a-containing (ATAC) complex composed of at least Ada2a, Atac1, Hcf, Ada3, Gcn5, Mocs2B, Charac-14, Atac3, Atac2, NC2beta and wds.

It localises to the cytoplasm. Its subcellular location is the nucleus. The enzyme catalyses 2 [molybdopterin-synthase sulfur-carrier protein]-C-terminal-Gly-aminoethanethioate + cyclic pyranopterin phosphate + H2O = molybdopterin + 2 [molybdopterin-synthase sulfur-carrier protein]-C-terminal Gly-Gly + 2 H(+). The protein operates within cofactor biosynthesis; molybdopterin biosynthesis. Its function is as follows. Catalytic subunit of the molybdopterin synthase complex, a complex that catalyzes the conversion of precursor Z into molybdopterin. Acts by mediating the incorporation of 2 sulfur atoms from thiocarboxylated Mocs2A into precursor Z to generate a dithiolene group. Involved during biosynthesis of the molybdenum cofactor. This is Molybdopterin synthase catalytic subunit from Drosophila melanogaster (Fruit fly).